Reading from the N-terminus, the 158-residue chain is Protein Smg homolog (158 aa).

Belongs to the Smg family.

This chain is Protein Smg homolog, found in Thioalkalivibrio sulfidiphilus (strain HL-EbGR7).